The chain runs to 388 residues: tRNA(Ile)-lysidine synthase (388 aa).

An ATP-binding site is contributed by 51–56 (SGGRDS).

Belongs to the tRNA(Ile)-lysidine synthase family.

It is found in the cytoplasm. It carries out the reaction cytidine(34) in tRNA(Ile2) + L-lysine + ATP = lysidine(34) in tRNA(Ile2) + AMP + diphosphate + H(+). Its function is as follows. Ligates lysine onto the cytidine present at position 34 of the AUA codon-specific tRNA(Ile) that contains the anticodon CAU, in an ATP-dependent manner. Cytidine is converted to lysidine, thus changing the amino acid specificity of the tRNA from methionine to isoleucine. This Bifidobacterium longum (strain NCC 2705) protein is tRNA(Ile)-lysidine synthase.